A 120-amino-acid polypeptide reads, in one-letter code: MSIKSKNKLRQHRKIRIRKKIFGTADQPRLVIFRSNLHIYAQLVDDITGSTLLTTSTLSLKDNGINIRANKSGSTLVGKEIARLAIEKQIIKIVFDRNGYLYHGRVKAVADGAREGGLKF.

This sequence belongs to the universal ribosomal protein uL18 family. In terms of assembly, part of the 50S ribosomal subunit; part of the 5S rRNA/L5/L18/L25 subcomplex. Contacts the 5S and 23S rRNAs.

Its function is as follows. This is one of the proteins that bind and probably mediate the attachment of the 5S RNA into the large ribosomal subunit, where it forms part of the central protuberance. The polypeptide is Large ribosomal subunit protein uL18 (Lawsonia intracellularis (strain PHE/MN1-00)).